The following is a 163-amino-acid chain: IQSTSMDQGILTEDSMNSFIRTLIQAGIWKNKVPKQAARTKDGMQTTVKKTEAGADAMASKDTRLSFQPIVSVDAELLRQQRRFSSPRVLLSENTPLEPPPLYLTEEPTVLNRTSRRKREGKSHRGEYSVCDSESRWVTDKSSAVDIRGHQVTVLGEIRMGPS.

The signal sequence occupies residues Ile1–Ser3. Positions Thr4–Arg119 are excised as a propeptide. An N-linked (GlcNAc...) asparagine glycan is attached at Asn112.

This sequence belongs to the NGF-beta family.

Its subcellular location is the secreted. Seems to promote the survival of visceral and proprioceptive sensory neurons. This Eryx colubrinus colubrinus protein is Neurotrophin-3 (NTF3).